The chain runs to 500 residues: Autophagy-related protein 18 (500 aa).

Positions 192–212 are disordered; it reads DITGQQQQQQPGVDPATSNNT. WD repeat units lie at residues 238-278 and 283-322; these read AHKG…KVYQ and TYPT…VDNK. The L/FRRG motif signature appears at 279 to 283; sequence FRRGT. The segment at 320-374 is disordered; that stretch reads DNKSNELNSDDEIEDDLVPRYGDEDEEDEEIDEEATSINSNHSSKEPVVDAKRST. Positions 342–354 are enriched in acidic residues; sequence DEDEEDEEIDEEA. The span at 362–372 shows a compositional bias: basic and acidic residues; the sequence is SSKEPVVDAKR.

This sequence belongs to the WD repeat PROPPIN family. Component of the PI(3,5)P2 regulatory complex.

Its subcellular location is the preautophagosomal structure membrane. It is found in the vacuole membrane. The protein localises to the endosome membrane. Functionally, the PI(3,5)P2 regulatory complex regulates both the synthesis and turnover of phosphatidylinositol 3,5-bisphosphate (PtdIns(3,5)P2). Necessary for proper vacuole morphology. Plays an important role in osmotically-induced vacuole fragmentation. Required for cytoplasm to vacuole transport (Cvt) vesicle formation, pexophagy and starvation-induced autophagy. Involved in correct ATG9 trafficking to the pre-autophagosomal structure. Might also be involved in premeiotic DNA replication. In Kluyveromyces lactis (strain ATCC 8585 / CBS 2359 / DSM 70799 / NBRC 1267 / NRRL Y-1140 / WM37) (Yeast), this protein is Autophagy-related protein 18 (ATG18).